The following is a 344-amino-acid chain: Ferrochelatase (344 aa).

Residues histidine 211 and glutamate 292 each contribute to the Fe cation site.

It belongs to the ferrochelatase family.

It localises to the cytoplasm. The enzyme catalyses heme b + 2 H(+) = protoporphyrin IX + Fe(2+). Its pathway is porphyrin-containing compound metabolism; protoheme biosynthesis; protoheme from protoporphyrin-IX: step 1/1. Functionally, catalyzes the ferrous insertion into protoporphyrin IX. The sequence is that of Ferrochelatase from Methylobacillus flagellatus (strain ATCC 51484 / DSM 6875 / VKM B-1610 / KT).